The sequence spans 338 residues: Ketol-acid reductoisomerase (NADP(+)) (338 aa).

A KARI N-terminal Rossmann domain is found at 1–181 (MKVFYDKDAD…GGGRAGIIET (181 aa)). NADP(+)-binding positions include 24 to 27 (YGSQ), arginine 47, and serine 52. Residue histidine 107 is part of the active site. Position 133 (glycine 133) interacts with NADP(+). The KARI C-terminal knotted domain maps to 182–327 (NFREETETDL…SKLRAMMPWI (146 aa)). Mg(2+) is bound by residues aspartate 190, glutamate 194, glutamate 226, and glutamate 230. Position 251 (serine 251) interacts with substrate.

It belongs to the ketol-acid reductoisomerase family. Mg(2+) serves as cofactor.

The catalysed reaction is (2R)-2,3-dihydroxy-3-methylbutanoate + NADP(+) = (2S)-2-acetolactate + NADPH + H(+). The enzyme catalyses (2R,3R)-2,3-dihydroxy-3-methylpentanoate + NADP(+) = (S)-2-ethyl-2-hydroxy-3-oxobutanoate + NADPH + H(+). It participates in amino-acid biosynthesis; L-isoleucine biosynthesis; L-isoleucine from 2-oxobutanoate: step 2/4. The protein operates within amino-acid biosynthesis; L-valine biosynthesis; L-valine from pyruvate: step 2/4. Its function is as follows. Involved in the biosynthesis of branched-chain amino acids (BCAA). Catalyzes an alkyl-migration followed by a ketol-acid reduction of (S)-2-acetolactate (S2AL) to yield (R)-2,3-dihydroxy-isovalerate. In the isomerase reaction, S2AL is rearranged via a Mg-dependent methyl migration to produce 3-hydroxy-3-methyl-2-ketobutyrate (HMKB). In the reductase reaction, this 2-ketoacid undergoes a metal-dependent reduction by NADPH to yield (R)-2,3-dihydroxy-isovalerate. This Paraburkholderia xenovorans (strain LB400) protein is Ketol-acid reductoisomerase (NADP(+)).